A 537-amino-acid polypeptide reads, in one-letter code: Sodium/hydrogen exchanger 9B2 (537 aa).

The span at 1–10 (MGDEDKRITY) shows a compositional bias: basic and acidic residues. The segment at 1–28 (MGDEDKRITYEDSEPSTGMNYTPSMHQE) is disordered. Residues 1–86 (MGDEDKRITY…ACPPHGLLDR (86 aa)) are Cytoplasmic-facing. A compositionally biased stretch (polar residues) spans 15 to 27 (PSTGMNYTPSMHQ). Serine 49 is subject to Phosphoserine. A helical membrane pass occupies residues 87 to 104 (VITNVTIIVLLWAVVWSI). The Extracellular segment spans residues 105–113 (TGSECLPGG). Residues 114 to 133 (NLFGIIILFYCAIIGGKLLG) traverse the membrane as a helical segment. The Cytoplasmic portion of the chain corresponds to 134 to 144 (LIKLPTLPPLP). A helical transmembrane segment spans residues 145–161 (SLLGMLLAGFLIRNIPV). Residues 162–171 (INDNVQIKHK) lie on the Extracellular side of the membrane. A helical membrane pass occupies residues 172-189 (WSSSLRSIALSIILVRAG). The Cytoplasmic segment spans residues 190-200 (LGLDSKALKKL). Residues 201 to 227 (KGVCVRLSMGPCIVEACTSALLAHYLL) form a helical membrane-spanning segment. Residues 228–233 (GLPWQW) are Extracellular-facing. A helical transmembrane segment spans residues 234–242 (GFILGFVLG). Over 243–270 (AVSPAVVVPSMLLLQGGGYGVEKGVPTL) the chain is Cytoplasmic. The Na(+) site is built by valine 244, glycine 275, aspartate 278, and aspartate 279. A helical membrane pass occupies residues 271 to 290 (LMAAGSFDDILAITGFNTCL). The Extracellular portion of the chain corresponds to 291–300 (GIAFSTGSTV). Residues 301 to 324 (FNVLRGVLEVVIGVATGSVLGFFI) traverse the membrane as a helical segment. Topologically, residues 325–339 (QYFPSRDQDKLVCKR) are cytoplasmic. Residues 340-357 (TFLVLGLSVLAVFSSVHF) traverse the membrane as a helical segment. At 358–361 (GFPG) the chain is on the extracellular side. The chain crosses the membrane as a helical span at residues 362 to 373 (SGGLCTLVMAFL). The Cytoplasmic portion of the chain corresponds to 374 to 390 (AGMGWTSEKAEVEKIIA). The helical transmembrane segment at 391–411 (VAWDIFQPLLFGLIGAEVSIA) threads the bilayer. Residues 412–417 (SLRPET) lie on the Extracellular side of the membrane. A helical membrane pass occupies residues 418–440 (VGLCVATVGIAVLIRILTTFLMV). Topologically, residues 441–461 (CFAGFNLKEKIFISFAWLPKA) are cytoplasmic. The chain crosses the membrane as a helical span at residues 462–473 (TVQAAIGSVALD). Residues 474 to 486 (TARSHGEKQLEDY) lie on the Extracellular side of the membrane. The chain crosses the membrane as a helical span at residues 487–509 (GMDVLTVAFLSILITAPIGSLLI). Over 510-537 (GLLGPRLLQKVEHQNKDEEVQGETSVQV) the chain is Cytoplasmic.

The protein belongs to the monovalent cation:proton antiporter 1 (CPA1) transporter (TC 2.A.36) family. As to quaternary structure, homodimer. Dimerization is essential for SLC9B2 activity. Lipids seem to play a role in the stabilization of the dimerization subdomain. In terms of tissue distribution, widely expressed. High levels detected in the distal tubules of the kidney nephron. Detected in red blood cells (at protein level).

The protein resides in the cell membrane. It localises to the mitochondrion membrane. Its subcellular location is the endosome membrane. It is found in the recycling endosome membrane. The protein localises to the cytoplasmic vesicle. The protein resides in the secretory vesicle. It localises to the synaptic vesicle membrane. Its subcellular location is the cell projection. It is found in the cilium. The protein localises to the flagellum membrane. The protein resides in the basolateral cell membrane. It localises to the apical cell membrane. It carries out the reaction Li(+)(out) + H(+)(in) = Li(+)(in) + H(+)(out). The enzyme catalyses Li(+)(in) + Na(+)(out) = Li(+)(out) + Na(+)(in). The catalysed reaction is Na(+)(in) + H(+)(out) = Na(+)(out) + H(+)(in). Its activity is regulated as follows. Allosterically inhibited by the N-terminal domain. Inhibited by phloretin. In terms of biological role, electroneutral Na(+) Li(+)/H(+) antiporter that extrudes Na(+) or Li(+) in exchange for external protons across the membrane. Uses the proton gradient/membrane potential to extrude sodium. Contributes to the regulation of intracellular pH and sodium homeostasis. Also able to mediate Na(+)/Li(+) antiporter activity in kidney. May play a physiological role in renal tubular function and blood pressure homeostasis. Plays an important role for insulin secretion and clathrin-mediated endocytosis in beta-cells. Involved in sperm motility and fertility. It is controversial whether SLC9B2 plays a role in osteoclast differentiation or not. This chain is Sodium/hydrogen exchanger 9B2, found in Homo sapiens (Human).